Consider the following 236-residue polypeptide: 2,3,4,5-tetrahydropyridine-2,6-dicarboxylate N-acetyltransferase (236 aa).

This sequence belongs to the transferase hexapeptide repeat family. DapH subfamily.

It catalyses the reaction (S)-2,3,4,5-tetrahydrodipicolinate + acetyl-CoA + H2O = L-2-acetamido-6-oxoheptanedioate + CoA. It functions in the pathway amino-acid biosynthesis; L-lysine biosynthesis via DAP pathway; LL-2,6-diaminopimelate from (S)-tetrahydrodipicolinate (acetylase route): step 1/3. Catalyzes the transfer of an acetyl group from acetyl-CoA to tetrahydrodipicolinate. In Lactobacillus helveticus (strain DPC 4571), this protein is 2,3,4,5-tetrahydropyridine-2,6-dicarboxylate N-acetyltransferase.